Reading from the N-terminus, the 177-residue chain is Large ribosomal subunit protein uL6 (177 aa).

Belongs to the universal ribosomal protein uL6 family. As to quaternary structure, part of the 50S ribosomal subunit.

This protein binds to the 23S rRNA, and is important in its secondary structure. It is located near the subunit interface in the base of the L7/L12 stalk, and near the tRNA binding site of the peptidyltransferase center. The sequence is that of Large ribosomal subunit protein uL6 from Rhizobium rhizogenes (strain K84 / ATCC BAA-868) (Agrobacterium radiobacter).